A 446-amino-acid polypeptide reads, in one-letter code: uncharacterized protein (446 aa).

Disordered stretches follow at residues 198–233 (SIQK…ENYS), 309–337 (NEDN…DDSK), and 394–431 (SESV…FGNT). The segment covering 199-224 (IQKQIPKQTQEQTQKQTQEQTQESSQ) has biased composition (low complexity). Residues 317–333 (DNEEDSDESDIESDSDL) are compositionally biased toward acidic residues. Residues 397 to 418 (VKSDSNESKSIKPESIKSESIK) are compositionally biased toward basic and acidic residues.

This is an uncharacterized protein from Acanthamoeba polyphaga mimivirus (APMV).